The chain runs to 167 residues: Secreted LysM effector Blys6 (167 aa).

An N-terminal signal peptide occupies residues 1-16 (MKGLCVAACTLVLAAA). The LysM domain maps to 109–162 (KWYRIRRGDDCGPVASEFGISADQLIEWNPWLSADVDGTHYPCMNIWPTDNLCV).

The protein belongs to the secreted LysM effector family.

Its function is as follows. Might have a role in sequestration of chitin oligosaccharides (breakdown products of fungal cell walls that are released during invasion and act as triggers of host immunity) to dampen host defense. This chain is Secreted LysM effector Blys6, found in Beauveria bassiana (strain ARSEF 2860) (White muscardine disease fungus).